Reading from the N-terminus, the 237-residue chain is Phosphoribosylaminoimidazole-succinocarboxamide synthase (237 aa).

This sequence belongs to the SAICAR synthetase family.

It catalyses the reaction 5-amino-1-(5-phospho-D-ribosyl)imidazole-4-carboxylate + L-aspartate + ATP = (2S)-2-[5-amino-1-(5-phospho-beta-D-ribosyl)imidazole-4-carboxamido]succinate + ADP + phosphate + 2 H(+). The protein operates within purine metabolism; IMP biosynthesis via de novo pathway; 5-amino-1-(5-phospho-D-ribosyl)imidazole-4-carboxamide from 5-amino-1-(5-phospho-D-ribosyl)imidazole-4-carboxylate: step 1/2. The sequence is that of Phosphoribosylaminoimidazole-succinocarboxamide synthase from Oceanobacillus iheyensis (strain DSM 14371 / CIP 107618 / JCM 11309 / KCTC 3954 / HTE831).